The primary structure comprises 505 residues: Amidophosphoribosyltransferase (505 aa).

C2 (nucleophile) is an active-site residue. The region spanning 2–235 (CGIVGIVSQS…AGEAVYVTFD (234 aa)) is the Glutamine amidotransferase type-2 domain. Mg(2+) contacts are provided by T306, D368, and D369. Positions 484–505 (RNDNAKKKREKQASNLEIYNEQ) are disordered. Positions 496–505 (ASNLEIYNEQ) are enriched in polar residues.

In the C-terminal section; belongs to the purine/pyrimidine phosphoribosyltransferase family. It depends on Mg(2+) as a cofactor.

The catalysed reaction is 5-phospho-beta-D-ribosylamine + L-glutamate + diphosphate = 5-phospho-alpha-D-ribose 1-diphosphate + L-glutamine + H2O. It functions in the pathway purine metabolism; IMP biosynthesis via de novo pathway; N(1)-(5-phospho-D-ribosyl)glycinamide from 5-phospho-alpha-D-ribose 1-diphosphate: step 1/2. Its function is as follows. Catalyzes the formation of phosphoribosylamine from phosphoribosylpyrophosphate (PRPP) and glutamine. The chain is Amidophosphoribosyltransferase from Haemophilus influenzae (strain ATCC 51907 / DSM 11121 / KW20 / Rd).